Reading from the N-terminus, the 132-residue chain is Ribosome-binding factor A (132 aa).

This sequence belongs to the RbfA family. Monomer. Binds 30S ribosomal subunits, but not 50S ribosomal subunits or 70S ribosomes.

Its subcellular location is the cytoplasm. In terms of biological role, one of several proteins that assist in the late maturation steps of the functional core of the 30S ribosomal subunit. Associates with free 30S ribosomal subunits (but not with 30S subunits that are part of 70S ribosomes or polysomes). Required for efficient processing of 16S rRNA. May interact with the 5'-terminal helix region of 16S rRNA. This Pseudomonas putida (strain ATCC 700007 / DSM 6899 / JCM 31910 / BCRC 17059 / LMG 24140 / F1) protein is Ribosome-binding factor A.